Consider the following 245-residue polypeptide: Phycocyanobilin:ferredoxin oxidoreductase (245 aa).

This sequence belongs to the HY2 family.

It catalyses the reaction (2R,3Z)-phycocyanobilin + 4 oxidized [2Fe-2S]-[ferredoxin] = biliverdin IXalpha + 4 reduced [2Fe-2S]-[ferredoxin] + 4 H(+). In terms of biological role, catalyzes the four-electron reduction of biliverdin IX-alpha (2-electron reduction at both the A and D rings); the reaction proceeds via an isolatable 2-electron intermediate, 181,182-dihydrobiliverdin. The polypeptide is Phycocyanobilin:ferredoxin oxidoreductase (Rippkaea orientalis (strain PCC 8801 / RF-1) (Cyanothece sp. (strain PCC 8801))).